The primary structure comprises 415 residues: Mannosylglycerate hydrolase (415 aa).

Residues Tyr-23, 27–30 (WLWD), Tyr-76, Gln-98, and Gly-158 each bind substrate. Asp-160 functions as the Proton donor in the catalytic mechanism. Residues Arg-193 and 344–345 (YW) contribute to the substrate site. The Proton acceptor role is filled by Glu-388.

This sequence belongs to the glycosyl hydrolase 63 family. As to quaternary structure, homotetramer in solution.

It catalyses the reaction (2R)-2-O-(alpha-D-mannosyl)-glycerate + H2O = D-mannose + (R)-glycerate. The catalysed reaction is (2R)-2-O-(alpha-D-glucopyranosyl)-glycerate + H2O = (R)-glycerate + D-glucose. With respect to regulation, activity is not stimulated by divalent cations and not affected in the presence of EDTA. Functionally, hydrolase that catalyzes the hydrolysis of mannosylglycerate (MG), a solute produced in response to osmotic stress in thermophiles, into mannose and glycerate. Can also hydrolyze glucosylglycerate (GG) to glucose and glycerate, with similar catalytic efficiency. Is highly specific for MG and GG, and cannot use mannosylglyceramide (MGA), glucosylglycerol, mannosylglucosylglycerate (MGG), glucosylglucosylglycerate (GGG) or trehalose as substrates. The chain is Mannosylglycerate hydrolase from Thermus thermophilus (strain ATCC BAA-163 / DSM 7039 / HB27).